Here is a 584-residue protein sequence, read N- to C-terminus: Isocitrate dehydrogenase kinase/phosphatase (584 aa).

ATP-binding positions include 315 to 321 (APGVKGM) and Lys-336. Residue Asp-371 is part of the active site.

It belongs to the AceK family.

It localises to the cytoplasm. It catalyses the reaction L-seryl-[isocitrate dehydrogenase] + ATP = O-phospho-L-seryl-[isocitrate dehydrogenase] + ADP + H(+). In terms of biological role, bifunctional enzyme which can phosphorylate or dephosphorylate isocitrate dehydrogenase (IDH) on a specific serine residue. This is a regulatory mechanism which enables bacteria to bypass the Krebs cycle via the glyoxylate shunt in response to the source of carbon. When bacteria are grown on glucose, IDH is fully active and unphosphorylated, but when grown on acetate or ethanol, the activity of IDH declines drastically concomitant with its phosphorylation. The sequence is that of Isocitrate dehydrogenase kinase/phosphatase from Serratia proteamaculans (strain 568).